Consider the following 335-residue polypeptide: DNA-directed RNA polymerase subunit alpha (335 aa).

Residues Met-1–Glu-231 form an alpha N-terminal domain (alpha-NTD) region. Residues Lys-262 to Asn-335 are alpha C-terminal domain (alpha-CTD).

Belongs to the RNA polymerase alpha chain family. As to quaternary structure, in plastids the minimal PEP RNA polymerase catalytic core is composed of four subunits: alpha, beta, beta', and beta''. When a (nuclear-encoded) sigma factor is associated with the core the holoenzyme is formed, which can initiate transcription.

The protein resides in the plastid. The catalysed reaction is RNA(n) + a ribonucleoside 5'-triphosphate = RNA(n+1) + diphosphate. DNA-dependent RNA polymerase catalyzes the transcription of DNA into RNA using the four ribonucleoside triphosphates as substrates. In Cuscuta reflexa (Southern Asian dodder), this protein is DNA-directed RNA polymerase subunit alpha.